A 191-amino-acid chain; its full sequence is Large ribosomal subunit protein uL6 (191 aa).

The protein belongs to the universal ribosomal protein uL6 family. Part of the 50S ribosomal subunit.

Functionally, this protein binds to the 23S rRNA, and is important in its secondary structure. It is located near the subunit interface in the base of the L7/L12 stalk, and near the tRNA binding site of the peptidyltransferase center. This chain is Large ribosomal subunit protein uL6, found in Cyanothece sp. (strain PCC 7425 / ATCC 29141).